The following is a 51-amino-acid chain: Glutamine synthetase (51 aa).

It belongs to the glutamine synthetase family. In terms of assembly, homooctamer.

Its subcellular location is the cytoplasm. It catalyses the reaction L-glutamate + NH4(+) + ATP = L-glutamine + ADP + phosphate + H(+). This Vitis sp. (Grape) protein is Glutamine synthetase.